The primary structure comprises 374 residues: Putative serine/threonine-protein kinase ZK507.3 (374 aa).

Residues 25–296 (WKVIVELGKG…CKLTLKEPLV (272 aa)) enclose the Protein kinase domain. Residues 31 to 39 (LGKGGYGTV) and Lys-60 contribute to the ATP site. Residue Asp-158 is the Proton acceptor of the active site. The tract at residues 302 to 374 (NDNESGSTPT…KTRNKKPSRK (73 aa)) is disordered. The span at 306 to 324 (SGSTPTTSATACSPSSSTG) shows a compositional bias: low complexity. Over residues 334-343 (IASNIDQKSI) the composition is skewed to polar residues. The span at 364–374 (TKTRNKKPSRK) shows a compositional bias: basic residues.

The protein belongs to the protein kinase superfamily. Ser/Thr protein kinase family.

It carries out the reaction L-seryl-[protein] + ATP = O-phospho-L-seryl-[protein] + ADP + H(+). The enzyme catalyses L-threonyl-[protein] + ATP = O-phospho-L-threonyl-[protein] + ADP + H(+). The polypeptide is Putative serine/threonine-protein kinase ZK507.3 (Caenorhabditis elegans).